Here is a 425-residue protein sequence, read N- to C-terminus: Voltage-dependent calcium channel gamma-8 subunit (425 aa).

4 helical membrane-spanning segments follow: residues 19–39, 129–149, 158–178, and 208–228; these read VQVL…TIAI, SIFP…VAAS, IILG…IGVI, and FGGL…NIYI. Residues Ser252 and Ser255 each carry the phosphoserine modification. The interval 272–304 is disordered; sequence RRSRSSSRSSEPSPSRDASPGGPGGPGFASTDI. Over residues 277 to 287 the composition is skewed to low complexity; the sequence is SSRSSEPSPSR. Residues 318–338 traverse the membrane as a helical segment; sequence VAAGLAGAGGGGGGAVGAFGG. Positions 343 to 354 are enriched in gly residues; the sequence is AGGGGGGGGGAG. 2 disordered regions span residues 343 to 365 and 377 to 425; these read AGGG…ASGF and GGGV…TTPV. The segment covering 387-401 has biased composition (pro residues); sequence PPAPPAPAPPAPSAP. Positions 412 to 425 are enriched in polar residues; that stretch reads ASNTNTLNRKTTPV.

It belongs to the PMP-22/EMP/MP20 family. CACNG subfamily. As to quaternary structure, interacts with CACNA1C. Identified in a complex with the L-type calcium channel subunits CACNA1C, CACNA2D1 and either CACNB1 or CACNB2. Acts as an auxiliary subunit for AMPA-selective glutamate receptors (AMPARs). Found in a complex with GRIA1, GRIA2, GRIA3, GRIA4, CNIH2, CNIH3, CACNG2, CACNG3, CACNG4, CACNG5 and CACNG7. Interacts with CNIH2. Found in a complex with GRIA1, GRIA2, GRIA3, GRIA4, DLG4 and CNIH2. Palmitoylated. Probably palmitoylated by ZDHHC3 and ZDHHC7. As to expression, detected in heart left ventricle.

The protein localises to the cell membrane. The protein resides in the postsynaptic density membrane. In terms of biological role, regulates the activity of L-type calcium channels that contain CACNA1C as pore-forming subunit. Regulates the trafficking and gating properties of AMPA-selective glutamate receptors (AMPARs). Promotes their targeting to the cell membrane and synapses and modulates their gating properties by slowing their rates of activation, deactivation and desensitization and by mediating their resensitization. Does not show subunit-specific AMPA receptor regulation and regulates all AMPAR subunits. The protein is Voltage-dependent calcium channel gamma-8 subunit of Homo sapiens (Human).